The sequence spans 282 residues: Undecaprenyl-diphosphatase (282 aa).

The next 7 helical transmembrane spans lie at 39-59 (PGAA…LIYF), 85-105 (ATMG…GLLF), 115-135 (SLYW…LTEV), 153-173 (IGWK…IPGS), 196-216 (FSFL…LYET), 230-250 (LLVA…FLIT), and 260-280 (FIIY…TGAI).

It belongs to the UppP family.

It is found in the cell inner membrane. The enzyme catalyses di-trans,octa-cis-undecaprenyl diphosphate + H2O = di-trans,octa-cis-undecaprenyl phosphate + phosphate + H(+). Functionally, catalyzes the dephosphorylation of undecaprenyl diphosphate (UPP). Confers resistance to bacitracin. This chain is Undecaprenyl-diphosphatase, found in Chlorobium chlorochromatii (strain CaD3).